The following is a 156-amino-acid chain: Neuroactive polyprotein R15 (156 aa).

Positions 1 to 26 are cleaved as a signal peptide; it reads MDSAGLHINFRLSHVLTVVTCILYIL. The propeptide occupies 27 to 48; it reads PPTTTAYSLPAPGKAAFQHQLS. Cysteine 74 and cysteine 81 are oxidised to a cystine. A Pyrrolidone carboxylic acid modification is found at glutamine 120.

Expressed within the abdominal ganglion in neurons R15, RB(HE), the two L9(G) gill motoneurons, and L40 interneuron, all are parts of autonomic control circuit that contributes to implementing a central command to coordinate autonomic activity with escape locomotion.

The protein localises to the secreted. In terms of biological role, the alpha-1 peptide acts as an osmoregulatory peptide, increasing blood volume, and also modulates the activity of a set of cardiac motor neurons that control heart rate. This Aplysia californica (California sea hare) protein is Neuroactive polyprotein R15.